Here is an 845-residue protein sequence, read N- to C-terminus: Envelope glycoprotein gp160 (845 aa).

The N-terminal stretch at 1-28 (METQRNYPSLWRWGTLILGMLLICSAAQ) is a signal peptide. Residues 29-673 (NLWVTVYYGV…ISHWLWYIKI (645 aa)) are Extracellular-facing. The cysteines at positions 50 and 70 are disulfide-linked. 20 N-linked (GlcNAc...) asparagine; by host glycosylation sites follow: Asn84, Asn126, Asn132, Asn133, Asn136, Asn149, Asn153, Asn179, Asn180, Asn190, Asn223, Asn227, Asn234, Asn255, Asn269, Asn286, Asn294, Asn324, Asn331, and Asn347. Intrachain disulfides connect Cys115/Cys198, Cys122/Cys189, Cys127/Cys150, Cys211/Cys240, and Cys221/Cys232. The segment at 127–149 (CTNVRNNTSNSTSSMEAGGELTN) is V1. A V2 region spans residues 150-189 (CSFNVTTVLRDKQQKVHALFYRLDVVPIDNNSTQYRLINC). The V3 stretch occupies residues 289-322 (CTRPNNNTRTSIHLGPGRAFYATGDIIGDIRQAH). A disulfide bond links Cys289 and Cys323. A CD4-binding loop region spans residues 355-365 (NSGGDMEVRTH). 2 cysteine pairs are disulfide-bonded: Cys369/Cys434 and Cys376/Cys407. Residues 376–407 (CNTSGLFNSSWEMHTNYTSNDTKGNENITLPC) form a V4 region. 8 N-linked (GlcNAc...) asparagine; by host glycosylation sites follow: Asn377, Asn383, Asn391, Asn395, Asn402, Asn437, Asn449, and Asn454. V5 regions lie at residues 450–460 (ASAENYTFRPG) and 452–460 (AENYTFRPG). The interval 501-521 (AVGMGASFLGFLGAAGSTMGA) is fusion peptide. The interval 563-581 (KQLQARVLAVERYLRDQQL) is immunosuppression. Cys587 and Cys593 are oxidised to a cystine. Asn600, Asn605, Asn614, and Asn626 each carry an N-linked (GlcNAc...) asparagine; by host glycan. Residues 622–656 (KQISNYTEEIYRLLEVSQTQQEKNEQDLLALDKWA) are a coiled coil. An MPER; binding to GalCer region spans residues 651–672 (ALDKWASLWTWFDISHWLWYIK). Residues 674–694 (FIMIVGGLIGLRIIFAVLSIV) form a helical membrane-spanning segment. Topologically, residues 695-845 (NRVRQGYSPL…IRQGFERSLL (151 aa)) are cytoplasmic. A YXXL motif; contains endocytosis signal motif is present at residues 701 to 704 (YSPL). The tract at residues 708–731 (TLVPNPRGPDRPEGTEEGGGEQDR) is disordered. A Di-leucine internalization motif motif is present at residues 844–845 (LL).

This sequence belongs to the HIV-1 env protein family. The mature envelope protein (Env) consists of a homotrimer of non-covalently associated gp120-gp41 heterodimers. The resulting complex protrudes from the virus surface as a spike. There seems to be as few as 10 spikes on the average virion. Interacts with host CD4, CCR5 and CXCR4. Gp120 also interacts with the C-type lectins CD209/DC-SIGN and CLEC4M/DC-SIGNR (collectively referred to as DC-SIGN(R)). Gp120 and gp41 interact with GalCer. Gp120 interacts with host ITGA4/ITGB7 complex; on CD4+ T-cells, this interaction results in rapid activation of integrin ITGAL/LFA-1, which facilitates efficient cell-to-cell spreading of HIV-1. Gp120 interacts with cell-associated heparan sulfate; this interaction increases virus infectivity on permissive cells and may be involved in infection of CD4- cells. In terms of assembly, the mature envelope protein (Env) consists of a homotrimer of non-covalently associated gp120-gp41 heterodimers. The resulting complex protrudes from the virus surface as a spike. There seems to be as few as 10 spikes on the average virion. In terms of processing, highly glycosylated by host. The high number of glycan on the protein is reffered to as 'glycan shield' because it contributes to hide protein sequence from adaptive immune system. Post-translationally, palmitoylation of the transmembrane protein and of Env polyprotein (prior to its proteolytic cleavage) is essential for their association with host cell membrane lipid rafts. Palmitoylation is therefore required for envelope trafficking to classical lipid rafts, but not for viral replication. Specific enzymatic cleavages in vivo yield mature proteins. Envelope glycoproteins are synthesized as an inactive precursor that is heavily N-glycosylated and processed likely by host cell furin in the Golgi to yield the mature SU and TM proteins. The cleavage site between SU and TM requires the minimal sequence [KR]-X-[KR]-R. About 2 of the 9 disulfide bonds of gp41 are reduced by P4HB/PDI, following binding to CD4 receptor.

It localises to the virion membrane. The protein resides in the host cell membrane. It is found in the host endosome membrane. Oligomerizes in the host endoplasmic reticulum into predominantly trimers. In a second time, gp160 transits in the host Golgi, where glycosylation is completed. The precursor is then proteolytically cleaved in the trans-Golgi and thereby activated by cellular furin or furin-like proteases to produce gp120 and gp41. Its function is as follows. Attaches the virus to the host lymphoid cell by binding to the primary receptor CD4. This interaction induces a structural rearrangement creating a high affinity binding site for a chemokine coreceptor like CXCR4 and/or CCR5. Acts as a ligand for CD209/DC-SIGN and CLEC4M/DC-SIGNR, which are respectively found on dendritic cells (DCs), and on endothelial cells of liver sinusoids and lymph node sinuses. These interactions allow capture of viral particles at mucosal surfaces by these cells and subsequent transmission to permissive cells. HIV subverts the migration properties of dendritic cells to gain access to CD4+ T-cells in lymph nodes. Virus transmission to permissive T-cells occurs either in trans (without DCs infection, through viral capture and transmission), or in cis (following DCs productive infection, through the usual CD4-gp120 interaction), thereby inducing a robust infection. In trans infection, bound virions remain infectious over days and it is proposed that they are not degraded, but protected in non-lysosomal acidic organelles within the DCs close to the cell membrane thus contributing to the viral infectious potential during DCs' migration from the periphery to the lymphoid tissues. On arrival at lymphoid tissues, intact virions recycle back to DCs' cell surface allowing virus transmission to CD4+ T-cells. Functionally, acts as a class I viral fusion protein. Under the current model, the protein has at least 3 conformational states: pre-fusion native state, pre-hairpin intermediate state, and post-fusion hairpin state. During fusion of viral and target intracellular membranes, the coiled coil regions (heptad repeats) assume a trimer-of-hairpins structure, positioning the fusion peptide in close proximity to the C-terminal region of the ectodomain. The formation of this structure appears to drive apposition and subsequent fusion of viral and target cell membranes. Complete fusion occurs in host cell endosomes and is dynamin-dependent, however some lipid transfer might occur at the plasma membrane. The virus undergoes clathrin-dependent internalization long before endosomal fusion, thus minimizing the surface exposure of conserved viral epitopes during fusion and reducing the efficacy of inhibitors targeting these epitopes. Membranes fusion leads to delivery of the nucleocapsid into the cytoplasm. This Homo sapiens (Human) protein is Envelope glycoprotein gp160.